We begin with the raw amino-acid sequence, 117 residues long: Large ribosomal subunit protein uL18 (117 aa).

This sequence belongs to the universal ribosomal protein uL18 family. Part of the 50S ribosomal subunit; part of the 5S rRNA/L5/L18/L25 subcomplex. Contacts the 5S and 23S rRNAs.

Its function is as follows. This is one of the proteins that bind and probably mediate the attachment of the 5S RNA into the large ribosomal subunit, where it forms part of the central protuberance. The protein is Large ribosomal subunit protein uL18 of Cronobacter sakazakii (strain ATCC BAA-894) (Enterobacter sakazakii).